Consider the following 73-residue polypeptide: U-scoloptoxin(22)-Cw1a (73 aa).

A signal peptide spans 1–24 (MRRFVFLAFVLVLFVIANLDSSSA).

It belongs to the scoloptoxin-22 family. Contains 1 disulfide bond. In terms of tissue distribution, expressed by the venom gland.

Its subcellular location is the secreted. This chain is U-scoloptoxin(22)-Cw1a, found in Cormocephalus westwoodi (Westwood's green centipede).